Reading from the N-terminus, the 222-residue chain is Probable transaldolase (222 aa).

The active-site Schiff-base intermediate with substrate is the Lys83.

This sequence belongs to the transaldolase family. Type 3B subfamily.

The protein resides in the cytoplasm. The catalysed reaction is D-sedoheptulose 7-phosphate + D-glyceraldehyde 3-phosphate = D-erythrose 4-phosphate + beta-D-fructose 6-phosphate. It participates in carbohydrate degradation; pentose phosphate pathway; D-glyceraldehyde 3-phosphate and beta-D-fructose 6-phosphate from D-ribose 5-phosphate and D-xylulose 5-phosphate (non-oxidative stage): step 2/3. Its function is as follows. Transaldolase is important for the balance of metabolites in the pentose-phosphate pathway. This chain is Probable transaldolase, found in Nitrosopumilus maritimus (strain SCM1).